Reading from the N-terminus, the 891-residue chain is Bifunctional aldehyde-alcohol dehydrogenase AdhE (891 aa).

An aldehyde dehydrogenase region spans residues 2–440 (AVTNVAELNA…ENVGPKHLIN (439 aa)). Residues 110–115 (IVPTTN), Gly195, and Gly213 contribute to the NAD(+) site. The active-site Nucleophile is Cys246. NAD(+)-binding residues include Glu335 and Leu419. The segment at 441 to 448 (KKTVAKRA) is linker. The tract at residues 449-891 (ENMLWHKLPK…KAEKKAKKSA (443 aa)) is alcohol dehydrogenase. NAD(+) is bound by residues Asp487, Asp519, 546 to 550 (GSPMD), 597 to 598 (TT), Val610, Lys619, and Leu638. Fe cation contacts are provided by Asp653, His657, His723, and His737.

The protein in the N-terminal section; belongs to the aldehyde dehydrogenase family. It in the C-terminal section; belongs to the iron-containing alcohol dehydrogenase family. Forms long filaments, called spirosomes. Fe(2+) serves as cofactor.

It carries out the reaction acetaldehyde + NAD(+) + CoA = acetyl-CoA + NADH + H(+). It catalyses the reaction ethanol + NAD(+) = acetaldehyde + NADH + H(+). The catalysed reaction is a primary alcohol + NAD(+) = an aldehyde + NADH + H(+). Under fermentative conditions, catalyzes the sequential NADH-dependent reduction of acetyl-CoA to acetaldehyde and then to ethanol. Plays an important role in virulence and is critical for proper regulation of virulence gene expression. The polypeptide is Bifunctional aldehyde-alcohol dehydrogenase AdhE (Escherichia coli O157:H7).